Consider the following 445-residue polypeptide: MAALEERGLSQDQTEKLLQFQDLTGIESIDQCRQTLQQHNWNIETAVQDRLNEQEGVPRVFNTTPNRPLQVNTADHRVYSYVVSRPQPRGLLGWGYYLIMLPFRITYYTVLDIFRFALRFIRPDPRSRVTDPVGDVVSFIHLFEEKYGSTHPVFYQGTYSQALNDAKQELRFLLVYLHGEDHQDSDDFCRNTLCTSEVTHFINSRMLFWACSSNKPEGFRVSQALHESTYPFLAMIMLKDRRMTVVGRLEGLIQPQDLINQLTFIIEANQTYLVSERLEREERNQTQVLRQQQDEAYLVSLRADQEKERKKKEKQDQKRREEEEAQRKQMLEERKKRNLEEEKERKSECLPAEPVPDHPDNVKIIFKMPNGTRVERRFLFTQSLSVIHDFLFSLKETPEKFQIVTSFPRQVLPCLPSEEIPVPPTLQEAGLSQSQLLFVQDLTDD.

One can recognise a UBA domain in the interval 12-48 (DQTEKLLQFQDLTGIESIDQCRQTLQQHNWNIETAVQ). A coiled-coil region spans residues 275 to 353 (SERLEREERN…ERKSECLPAE (79 aa)). The tract at residues 302-355 (RADQEKERKKKEKQDQKRREEEEAQRKQMLEERKKRNLEEEKERKSECLPAEPV) is disordered. The segment covering 303 to 348 (ADQEKERKKKEKQDQKRREEEEAQRKQMLEERKKRNLEEEKERKSE) has biased composition (basic and acidic residues). The UBX domain maps to 357 to 439 (DHPDNVKIIF…GLSQSQLLFV (83 aa)).

Its subcellular location is the cytoplasm. The protein localises to the lipid droplet. The protein resides in the endoplasmic reticulum. Functionally, plays an important role in endoplasmic reticulum-associated degradation (ERAD) that mediates ubiquitin-dependent degradation of misfolded endoplasmic reticulum proteins. Involved in inhibition of lipid droplet degradation. Involved in stress granule disassembly. The sequence is that of FAS-associated factor 2-B (faf2-b) from Xenopus laevis (African clawed frog).